A 760-amino-acid chain; its full sequence is U-box domain-containing protein 3 (760 aa).

Positions 146–217 (LMELMENALR…EQTEQLIELV (72 aa)) form a coiled coil. Residues 237–311 (SIPPYFRCPL…ASWLEANRIN (75 aa)) form the U-box domain. Residues 424–434 (ILGNHQSSSEM) are compositionally biased toward polar residues. The tract at residues 424-448 (ILGNHQSSSEMSPKKNLESSNNVNH) is disordered. 5 ARM repeats span residues 504–543 (IENRVHIGRCGAITPLLSLLYSEEKLTQEHAVTALLNLSI), 545–584 (ELNKAMIVEVGAIEPLVHVLNTGNDRAKENSAASLFSLSV), 586–626 (QVNR…NLSI), 628–666 (HDNKARIVQAKAVKYLVELLDPDLEMVDKAVALLANLSA), and 668–707 (GEGRQAIVREGGIPLLVETVDLGSQRGKENAASVLLQLCL).

It carries out the reaction S-ubiquitinyl-[E2 ubiquitin-conjugating enzyme]-L-cysteine + [acceptor protein]-L-lysine = [E2 ubiquitin-conjugating enzyme]-L-cysteine + N(6)-ubiquitinyl-[acceptor protein]-L-lysine.. It participates in protein modification; protein ubiquitination. In terms of biological role, functions as an E3 ubiquitin ligase. This chain is U-box domain-containing protein 3 (PUB3), found in Arabidopsis thaliana (Mouse-ear cress).